A 215-amino-acid polypeptide reads, in one-letter code: Ribose-5-phosphate isomerase A (215 aa).

Substrate-binding positions include 26 to 29 (TGST), 79 to 82 (DGAD), and 92 to 95 (KGGG). The active-site Proton acceptor is the Glu-101. Lys-119 serves as a coordination point for substrate.

It belongs to the ribose 5-phosphate isomerase family. In terms of assembly, homodimer.

It catalyses the reaction aldehydo-D-ribose 5-phosphate = D-ribulose 5-phosphate. The protein operates within carbohydrate degradation; pentose phosphate pathway; D-ribose 5-phosphate from D-ribulose 5-phosphate (non-oxidative stage): step 1/1. Catalyzes the reversible conversion of ribose-5-phosphate to ribulose 5-phosphate. The chain is Ribose-5-phosphate isomerase A from Xylella fastidiosa (strain Temecula1 / ATCC 700964).